The following is a 24-amino-acid chain: Lycosin-I (24 aa).

Belongs to the cationic peptide 04 (cupiennin) family. 05 subfamily. As to quaternary structure, monomer in solution. Small size oligomers on the lipid membranes.

The protein localises to the secreted. The protein resides in the target cell membrane. Antimicrobial peptide that inhibits many reference strains of bacteria and fungi. Is potent against Candida species and multidrug-resistant Acinetobacter baumannii (MDRAB). Is probably localized in the cytoplasm after being transported through the cell wall and membrane. Is able to interact with cell membranes and enter into cell plasma to activate the mitochondrial death pathway to sensitize cancer cells for apoptosis, as well as up-regulates p27 to inhibit cell proliferation. It shows very low effect on normal cells, such as erythrocytes, Hek293t cells. It also potently inhibits tumor cell growth in vitro, and suppresses various tumor growth in vivo when tested in human cancer xenograft models. It interacts with the cell membrane and is then internalized into the cytoplasm of cancer cells to initiate the programmable cell death. In addition, this peptide has the therapeutic effects of anti-hypertension by endothelium-dependent vasodilatation via the NO/sGC/cGMP signaling pathway. In vivo, this peptide also shows a significant ability to inhibit T.gondii invasion and proliferation, making it a potential alternative agent for the treatment of toxoplasmosis. The polypeptide is Lycosin-I (Lycosa singoriensis (Wolf spider)).